We begin with the raw amino-acid sequence, 77 residues long: Acyl carrier protein (77 aa).

The region spanning 2–77 (SDIAARVKKI…DATKFISEAQ (76 aa)) is the Carrier domain. Residue Ser37 is modified to O-(pantetheine 4'-phosphoryl)serine.

Belongs to the acyl carrier protein (ACP) family. 4'-phosphopantetheine is transferred from CoA to a specific serine of apo-ACP by AcpS. This modification is essential for activity because fatty acids are bound in thioester linkage to the sulfhydryl of the prosthetic group.

The protein localises to the cytoplasm. The protein operates within lipid metabolism; fatty acid biosynthesis. In terms of biological role, carrier of the growing fatty acid chain in fatty acid biosynthesis. The sequence is that of Acyl carrier protein from Jannaschia sp. (strain CCS1).